We begin with the raw amino-acid sequence, 112 residues long: T cell receptor alpha variable 34 (112 aa).

The first 21 residues, 1–21, serve as a signal peptide directing secretion; the sequence is METVLQVLLGILGFQAAWVSS. Residues 22–112 enclose the Ig-like domain; it reads QELEQSPQSL…HAGIYLCGAD (91 aa). 2 N-linked (GlcNAc...) asparagine glycosylation sites follow: asparagine 38 and asparagine 42. Cysteine 43 and cysteine 109 are joined by a disulfide.

In terms of assembly, alpha-beta TR is a heterodimer composed of an alpha and beta chain; disulfide-linked. The alpha-beta TR is associated with the transmembrane signaling CD3 coreceptor proteins to form the TR-CD3 (TcR or TCR). The assembly of alpha-beta TR heterodimers with CD3 occurs in the endoplasmic reticulum where a single alpha-beta TR heterodimer associates with one CD3D-CD3E heterodimer, one CD3G-CD3E heterodimer and one CD247 homodimer forming a stable octameric structure. CD3D-CD3E and CD3G-CD3E heterodimers preferentially associate with TR alpha and TR beta chains, respectively. The association of the CD247 homodimer is the last step of TcR assembly in the endoplasmic reticulum and is required for transport to the cell surface.

The protein localises to the cell membrane. Functionally, v region of the variable domain of T cell receptor (TR) alpha chain that participates in the antigen recognition. Alpha-beta T cell receptors are antigen specific receptors which are essential to the immune response and are present on the cell surface of T lymphocytes. Recognize peptide-major histocompatibility (MH) (pMH) complexes that are displayed by antigen presenting cells (APC), a prerequisite for efficient T cell adaptive immunity against pathogens. Binding of alpha-beta TR to pMH complex initiates TR-CD3 clustering on the cell surface and intracellular activation of LCK that phosphorylates the ITAM motifs of CD3G, CD3D, CD3E and CD247 enabling the recruitment of ZAP70. In turn ZAP70 phosphorylates LAT, which recruits numerous signaling molecules to form the LAT signalosome. The LAT signalosome propagates signal branching to three major signaling pathways, the calcium, the mitogen-activated protein kinase (MAPK) kinase and the nuclear factor NF-kappa-B (NF-kB) pathways, leading to the mobilization of transcription factors that are critical for gene expression and essential for T cell growth and differentiation. The T cell repertoire is generated in the thymus, by V-(D)-J rearrangement. This repertoire is then shaped by intrathymic selection events to generate a peripheral T cell pool of self-MH restricted, non-autoaggressive T cells. Post-thymic interaction of alpha-beta TR with the pMH complexes shapes TR structural and functional avidity. In Homo sapiens (Human), this protein is T cell receptor alpha variable 34.